Reading from the N-terminus, the 892-residue chain is Protein RRP6-like 3 (892 aa).

One can recognise a 3'-5' exonuclease domain in the interval 119–287 (YVWVETESQL…IADSLTTELK (169 aa)). One can recognise an HRDC domain in the interval 350-436 (SLNAEELVRK…CSHLDDIYKM (87 aa)). Positions 785-811 (VDDSGDGTSEGDGAKELNDTQCNGNTL) are disordered.

It is found in the cytoplasm. The protein resides in the cytosol. The protein is Protein RRP6-like 3 of Arabidopsis thaliana (Mouse-ear cress).